A 1102-amino-acid polypeptide reads, in one-letter code: Voltage-gated delayed rectifier potassium channel KCNH8 (1102 aa).

Over 1-225 (MPVMKGLLAP…HFSTFKAGWD (225 aa)) the chain is Cytoplasmic. A PAS domain is found at 18 to 90 (IATRFDGTHS…LQIEKSLEEK (73 aa)). In terms of domain architecture, PAC spans 93-145 (FKGEIMFYKKNGAPFWCLLDIVPIKNEKGDVVLFLASFKDITDTKVKITSEDK). Residues 142–151 (SEDKKEDRTK) show a composition bias toward basic and acidic residues. Positions 142 to 162 (SEDKKEDRTKGRSRAGSHFDS) are disordered. The chain crosses the membrane as a helical span at residues 226–246 (WLILLATFYVAVTVPYNVCFI). The Extracellular segment spans residues 247 to 255 (GNEDLSTTR). Residues 256-276 (STTVSDIAVEILFIIDIILNF) form a helical membrane-spanning segment. The Cytoplasmic segment spans residues 277–298 (RTTYVSKSGQVIFEARSICIHY). The chain crosses the membrane as a helical span at residues 299-319 (VTTWFIIDLIAALPFDLLYAF). Residue Asn320 is glycosylated (N-linked (GlcNAc...) asparagine). Over 320–327 (NVTVVSLV) the chain is Extracellular. Residues 328–348 (HLLKTVRLLRLLRLLQKLDRY) traverse the membrane as a helical; Voltage-sensor segment. Residues 349–357 (SQHSTIVLT) lie on the Cytoplasmic side of the membrane. The helical transmembrane segment at 358-378 (LLMSMFALLAHWMACIWYVIG) threads the bilayer. The Extracellular segment spans residues 379-419 (KMEREDNSLLKWEVGWLHELGKRLESPYYGNNTLGGPSIRS). N-linked (GlcNAc...) asparagine glycosylation occurs at Asn409. Residues 420–440 (AYIAALYFTLSSLTSVGFGNV) constitute an intramembrane region (pore-forming). The Selectivity filter motif lies at 434–439 (SVGFGN). The Extracellular segment spans residues 441-448 (SANTDAEK). Residues 449–469 (IFSICTMLIGALMHALVFGNV) form a helical membrane-spanning segment. Over 470-1102 (TAIIQRMYSR…DVKDSKAINV (633 aa)) the chain is Cytoplasmic. The segment at 551–668 (LFECASRGCL…HKFVEDIQHD (118 aa)) is cNMP-binding domain. Positions 684-693 (RLSNKSTVSQ) are enriched in polar residues. 3 disordered regions span residues 684 to 743 (RLSN…KKTG), 764 to 841 (HSPI…PEPR), and 960 to 991 (LVGSSPQRTEAHEQNPADSELHHSPNLDYSPS). Acidic residues predominate over residues 710–723 (VEDEEEEEVEEEET). Over residues 724 to 737 (TSLSPIYTRGSSVS) the composition is skewed to polar residues. A compositionally biased stretch (basic and acidic residues) spans 968–984 (TEAHEQNPADSELHHSP).

The protein belongs to the potassium channel family. H (Eag) (TC 1.A.1.20) subfamily. Kv12.1/KCNH8 sub-subfamily. In terms of assembly, the potassium channel is probably composed of a homo- or heterotetrameric complex of pore-forming alpha subunits that can associate with modulating beta subunits.

It localises to the membrane. It carries out the reaction K(+)(in) = K(+)(out). In terms of biological role, pore-forming (alpha) subunit of a voltage-gated delayed rectifier potassium channel that mediates outward-rectifying potassium currents. Elicits a slowly activating, non-inactivating and slowly deactivation outwards potassium current at depolarizating voltages from -30 mV to +50mV. Shows no obvious change in the activation rate from different holding potentials. Activation is strongly dependent on the pH of the external solution. In Mus musculus (Mouse), this protein is Voltage-gated delayed rectifier potassium channel KCNH8.